The chain runs to 89 residues: Mitochondrial import inner membrane translocase subunit Tim9 (89 aa).

Residue Ala-2 is modified to N-acetylalanine. The short motif at 28 to 52 (CFLDCVKDFTTREVKPEETTCSEHC) is the Twin CX3C motif element. 2 cysteine pairs are disulfide-bonded: Cys-28–Cys-52 and Cys-32–Cys-48.

It belongs to the small Tim family. In terms of assembly, heterohexamer; composed of 3 copies of TIMM9 and 3 copies of TIMM10/TIM10A, named soluble 70 kDa complex. The complex forms a 6-bladed alpha-propeller structure and associates with the TIMM22 component of the TIM22 complex. Interacts with multi-pass transmembrane proteins in transit. Also forms a complex composed of TIMM9, TIMM10/TIM10A and FXC1/TIM10B. In terms of tissue distribution, ubiquitous, with highest expression in heart, kidney, liver and skeletal muscle.

The protein resides in the mitochondrion inner membrane. Mitochondrial intermembrane chaperone that participates in the import and insertion of multi-pass transmembrane proteins into the mitochondrial inner membrane. May also be required for the transfer of beta-barrel precursors from the TOM complex to the sorting and assembly machinery (SAM complex) of the outer membrane. Acts as a chaperone-like protein that protects the hydrophobic precursors from aggregation and guide them through the mitochondrial intermembrane space. In Homo sapiens (Human), this protein is Mitochondrial import inner membrane translocase subunit Tim9 (TIMM9).